The chain runs to 108 residues: Insertion element IS6110 uncharacterized 12.0 kDa protein (108 aa).

It belongs to the transposase 8 family.

In Mycobacterium bovis (strain ATCC BAA-935 / AF2122/97), this protein is Insertion element IS6110 uncharacterized 12.0 kDa protein.